We begin with the raw amino-acid sequence, 498 residues long: Guanosine-5'-triphosphate,3'-diphosphate pyrophosphatase (498 aa).

This sequence belongs to the GppA/Ppx family. GppA subfamily.

The enzyme catalyses guanosine 3'-diphosphate 5'-triphosphate + H2O = guanosine 3',5'-bis(diphosphate) + phosphate + H(+). Its pathway is purine metabolism; ppGpp biosynthesis; ppGpp from GTP: step 2/2. In terms of biological role, catalyzes the conversion of pppGpp to ppGpp. Guanosine pentaphosphate (pppGpp) is a cytoplasmic signaling molecule which together with ppGpp controls the 'stringent response', an adaptive process that allows bacteria to respond to amino acid starvation, resulting in the coordinated regulation of numerous cellular activities. This Pectobacterium atrosepticum (strain SCRI 1043 / ATCC BAA-672) (Erwinia carotovora subsp. atroseptica) protein is Guanosine-5'-triphosphate,3'-diphosphate pyrophosphatase.